Consider the following 451-residue polypeptide: UPF0210 protein NMA1908 (451 aa).

This sequence belongs to the UPF0210 family. As to quaternary structure, homodimer.

This is UPF0210 protein NMA1908 from Neisseria meningitidis serogroup A / serotype 4A (strain DSM 15465 / Z2491).